A 124-amino-acid chain; its full sequence is Small ribosomal subunit protein uS12 (124 aa).

Positions 1–24 (MTTINQLVRKPRQATTYKSASPAL) are disordered. D89 carries the post-translational modification 3-methylthioaspartic acid.

The protein belongs to the universal ribosomal protein uS12 family. Part of the 30S ribosomal subunit. Contacts proteins S8 and S17. May interact with IF1 in the 30S initiation complex.

With S4 and S5 plays an important role in translational accuracy. In terms of biological role, interacts with and stabilizes bases of the 16S rRNA that are involved in tRNA selection in the A site and with the mRNA backbone. Located at the interface of the 30S and 50S subunits, it traverses the body of the 30S subunit contacting proteins on the other side and probably holding the rRNA structure together. The combined cluster of proteins S8, S12 and S17 appears to hold together the shoulder and platform of the 30S subunit. This is Small ribosomal subunit protein uS12 from Xanthomonas axonopodis pv. citri (strain 306).